The following is a 120-amino-acid chain: Large ribosomal subunit protein uL18 (120 aa).

A compositionally biased stretch (basic and acidic residues) spans Met-1–Gln-10. Residues Met-1–Pro-24 form a disordered region.

It belongs to the universal ribosomal protein uL18 family. As to quaternary structure, part of the 50S ribosomal subunit; part of the 5S rRNA/L5/L18/L25 subcomplex. Contacts the 5S and 23S rRNAs.

Its function is as follows. This is one of the proteins that bind and probably mediate the attachment of the 5S RNA into the large ribosomal subunit, where it forms part of the central protuberance. The protein is Large ribosomal subunit protein uL18 of Gloeothece citriformis (strain PCC 7424) (Cyanothece sp. (strain PCC 7424)).